Consider the following 148-residue polypeptide: 3-dehydroquinate dehydratase (148 aa).

The Proton acceptor role is filled by Tyr-24. Asn-75, His-81, and Asp-88 together coordinate substrate. His-101 (proton donor) is an active-site residue. Substrate-binding positions include 102–103 and Arg-112; that span reads LS.

It belongs to the type-II 3-dehydroquinase family. In terms of assembly, homododecamer.

The enzyme catalyses 3-dehydroquinate = 3-dehydroshikimate + H2O. The protein operates within metabolic intermediate biosynthesis; chorismate biosynthesis; chorismate from D-erythrose 4-phosphate and phosphoenolpyruvate: step 3/7. In terms of biological role, catalyzes a trans-dehydration via an enolate intermediate. The chain is 3-dehydroquinate dehydratase from Rhizobium meliloti (strain 1021) (Ensifer meliloti).